A 228-amino-acid polypeptide reads, in one-letter code: Ephrin-A5 (228 aa).

Positions 1 to 20 are cleaved as a signal peptide; the sequence is MLHVEMLTLLFLVLWMCVFS. Positions 29–162 constitute an Ephrin RBD domain; that stretch reads ADRYAVYWNS…KLKVFVRPTN (134 aa). An N-linked (GlcNAc...) asparagine glycan is attached at N37. 2 disulfide bridges follow: C62-C102 and C90-C151. Positions 186 to 205 are disordered; sequence EPADDTVHESAEPSRGENAA. Basic and acidic residues predominate over residues 190-200; the sequence is DTVHESAEPSR. A lipid anchor (GPI-anchor amidated asparagine) is attached at N203. Residues 204–228 constitute a propeptide, removed in mature form; that stretch reads AAQTPRIPSRLLAILLFLLAMLLTL.

The protein belongs to the ephrin family. Binds to the receptor tyrosine kinases EPHA2, EPHA3, EPHB1 and EPHB2. Interacts with EPHA8; activates EPHA8. Forms a ternary EFNA5-EPHA3-ADAM10 complex mediating EFNA5 extracellular domain shedding by ADAM10 which regulates the EFNA5-EPHA3 complex internalization and function. Expressed in brain, heart, placenta and lung.

It localises to the cell membrane. It is found in the membrane. The protein localises to the caveola. Cell surface GPI-bound ligand for Eph receptors, a family of receptor tyrosine kinases which are crucial for migration, repulsion and adhesion during neuronal, vascular and epithelial development. Binds promiscuously Eph receptors residing on adjacent cells, leading to contact-dependent bidirectional signaling into neighboring cells. The signaling pathway downstream of the receptor is referred to as forward signaling while the signaling pathway downstream of the ephrin ligand is referred to as reverse signaling. Induces compartmentalized signaling within a caveolae-like membrane microdomain when bound to the extracellular domain of its cognate receptor. This signaling event requires the activity of the Fyn tyrosine kinase. Activates the EPHA3 receptor to regulate cell-cell adhesion and cytoskeletal organization. With the receptor EPHA2 may regulate lens fiber cells shape and interactions and be important for lens transparency maintenance. May function actively to stimulate axon fasciculation. The interaction of EFNA5 with EPHA5 also mediates communication between pancreatic islet cells to regulate glucose-stimulated insulin secretion. Cognate/functional ligand for EPHA7, their interaction regulates brain development modulating cell-cell adhesion and repulsion. The polypeptide is Ephrin-A5 (Efna5) (Rattus norvegicus (Rat)).